The following is a 210-amino-acid chain: Calcineurin B-like protein 4 (210 aa).

Gly2 carries the N-myristoyl glycine lipid modification. 4 consecutive EF-hand domains span residues 31–66, 67–102, 104–139, and 148–183; these read EVEA…RNSR, KANL…FHPK, PKSE…LLDE, and AVEA…NPAS. Ca(2+)-binding residues include Asp161, Asn163, Asp165, Arg167, and Glu172.

It belongs to the calcineurin regulatory subunit family. Homodimer. Interacts with CIPK24. Expressed in leaves.

It is found in the cell membrane. Its function is as follows. Acts as a calcium sensor involved in the regulatory pathway for the control of intracellular Na(+) and K(+) homeostasis and salt tolerance. Operates in synergy with CIPK24 to activate the plasma membrane Na(+)/H(+) antiporter SOS1. May function as positive regulator of salt stress responses. CBL proteins interact with CIPK serine-threonine protein kinases. Binding of a CBL protein to the regulatory NAF domain of a CIPK protein lead to the activation of the kinase in a calcium-dependent manner. The polypeptide is Calcineurin B-like protein 4 (CBL4) (Oryza sativa subsp. japonica (Rice)).